The sequence spans 238 residues: Tyrosine recombinase XerD-like (238 aa).

The region spanning 1–75 (MKLPNEIEEY…SANQYFLFLY (75 aa)) is the Core-binding (CB) domain. A Tyr recombinase domain is found at 90 to 238 (VQKKTQSSES…TITALEKYYR (149 aa)). Residues Lys-154 and Arg-204 contribute to the active site. Tyr-236 functions as the O-(3'-phospho-DNA)-tyrosine intermediate in the catalytic mechanism.

The protein belongs to the 'phage' integrase family. XerD-like subfamily.

The protein localises to the cytoplasm. Functionally, putative tyrosine recombinase. Not involved in the cutting and rejoining of the recombining DNA molecules on dif(SL) site. The sequence is that of Tyrosine recombinase XerD-like from Lactococcus lactis subsp. cremoris (strain SK11).